Here is a 279-residue protein sequence, read N- to C-terminus: Urease accessory protein UreD (279 aa).

This sequence belongs to the UreD family. In terms of assembly, ureD, UreF and UreG form a complex that acts as a GTP-hydrolysis-dependent molecular chaperone, activating the urease apoprotein by helping to assemble the nickel containing metallocenter of UreC. The UreE protein probably delivers the nickel.

The protein resides in the cytoplasm. In terms of biological role, required for maturation of urease via the functional incorporation of the urease nickel metallocenter. This chain is Urease accessory protein UreD, found in Streptococcus thermophilus (strain ATCC BAA-250 / LMG 18311).